We begin with the raw amino-acid sequence, 229 residues long: Enolase-phosphatase E1 (229 aa).

The segment at 207–229 (RDPASHHPQVQRFDDIHPEQIPA) is disordered. Residues 218–229 (RFDDIHPEQIPA) show a composition bias toward basic and acidic residues.

It belongs to the HAD-like hydrolase superfamily. MasA/MtnC family. In terms of assembly, monomer. Mg(2+) is required as a cofactor.

The enzyme catalyses 5-methylsulfanyl-2,3-dioxopentyl phosphate + H2O = 1,2-dihydroxy-5-(methylsulfanyl)pent-1-en-3-one + phosphate. The protein operates within amino-acid biosynthesis; L-methionine biosynthesis via salvage pathway; L-methionine from S-methyl-5-thio-alpha-D-ribose 1-phosphate: step 3/6. Its pathway is amino-acid biosynthesis; L-methionine biosynthesis via salvage pathway; L-methionine from S-methyl-5-thio-alpha-D-ribose 1-phosphate: step 4/6. In terms of biological role, bifunctional enzyme that catalyzes the enolization of 2,3-diketo-5-methylthiopentyl-1-phosphate (DK-MTP-1-P) into the intermediate 2-hydroxy-3-keto-5-methylthiopentenyl-1-phosphate (HK-MTPenyl-1-P), which is then dephosphorylated to form the acireductone 1,2-dihydroxy-3-keto-5-methylthiopentene (DHK-MTPene). The protein is Enolase-phosphatase E1 of Klebsiella pneumoniae subsp. pneumoniae (strain ATCC 700721 / MGH 78578).